The following is a 209-amino-acid chain: Imidazoleglycerol-phosphate dehydratase (209 aa).

The protein belongs to the imidazoleglycerol-phosphate dehydratase family.

The protein localises to the cytoplasm. The catalysed reaction is D-erythro-1-(imidazol-4-yl)glycerol 3-phosphate = 3-(imidazol-4-yl)-2-oxopropyl phosphate + H2O. Its pathway is amino-acid biosynthesis; L-histidine biosynthesis; L-histidine from 5-phospho-alpha-D-ribose 1-diphosphate: step 6/9. This Microcystis aeruginosa (strain NIES-843 / IAM M-2473) protein is Imidazoleglycerol-phosphate dehydratase.